We begin with the raw amino-acid sequence, 212 residues long: Large ribosomal subunit protein bL25 (212 aa).

A disordered region spans residues 181–212 (LSEPKEEVIEEDVEEVSADVPTVSETEEEDAE). A compositionally biased stretch (acidic residues) spans 188 to 197 (VIEEDVEEVS).

This sequence belongs to the bacterial ribosomal protein bL25 family. CTC subfamily. As to quaternary structure, part of the 50S ribosomal subunit; part of the 5S rRNA/L5/L18/L25 subcomplex. Contacts the 5S rRNA. Binds to the 5S rRNA independently of L5 and L18.

Its function is as follows. This is one of the proteins that binds to the 5S RNA in the ribosome where it forms part of the central protuberance. This chain is Large ribosomal subunit protein bL25, found in Finegoldia magna (strain ATCC 29328 / DSM 20472 / WAL 2508) (Peptostreptococcus magnus).